Consider the following 369-residue polypeptide: Biglycan (369 aa).

The signal sequence occupies residues 1 to 16 (MCPLWLLTLLLALSQA). Positions 17–37 (LPFEQKGFWDFTLDDGLLMMN) are excised as a propeptide. Residues serine 42 and serine 48 are each glycosylated (O-linked (Xyl...) (glycosaminoglycan) serine). 2 disulfide bridges follow: cysteine 64–cysteine 70 and cysteine 68–cysteine 77. LRR repeat units lie at residues 83–103 (KTVPKEISPDTTLLDLQNNDI), 104–127 (SELRKDDFKGLQHLYALVLVNNKI), 128–151 (SKIHEKAFSPLRKLQKLYISKNHL), 152–172 (VEIPPNLPSSLVELRIHDNRI), 173–196 (RKVPKGVFSGLRNMNCIEMGGNPL), 197–221 (ENSGFEPGAFDGLKLNYLRISEAKL), 222–242 (TGIPKDLPETLNELHLDHNKI), 243–266 (QAIELEDLLRYSKLYRLGLGHNQI), 267–290 (RMIENGSLSFLPTLRELHLDNNKL), 291–313 (SRVPAGLPDLKLLQVVYLHSNNI), 314–343 (TKVGINDFCPMGFGVKRAYYNGISLFNNPV), and 344–369 (PYWEVQPATFRCVTDRLAIQFGNYKK). 2 N-linked (GlcNAc...) asparagine glycosylation sites follow: asparagine 271 and asparagine 312. Cysteines 322 and 355 form a disulfide.

This sequence belongs to the small leucine-rich proteoglycan (SLRP) family. SLRP class I subfamily. In terms of processing, the two attached glycosaminoglycan chains can be either chondroitin sulfate or dermatan sulfate. As to expression, found in several connective tissues, especially in articular cartilages.

Its subcellular location is the secreted. It localises to the extracellular space. The protein localises to the extracellular matrix. Its function is as follows. May be involved in collagen fiber assembly. The polypeptide is Biglycan (Bgn) (Mus musculus (Mouse)).